Consider the following 786-residue polypeptide: Elastin (786 aa).

The signal sequence occupies residues 1-26 (MAGLTAAAPRPGVLLLLLSILHPSRP). Hydroxyproline is present on P34. A hydroxyproline; partial mark is found at P65, P67, and P88. Residues K104 and K107 each carry the allysine modification. Residue P116 is modified to 4-hydroxyproline; partial. 4 positions are modified to hydroxyproline; partial: P156, P167, P170, and P177. The residue at position 190 (P190) is a 4-hydroxyproline; partial. Residues K241, K261, and K265 each carry the allysine modification. A 4-hydroxyproline; partial mark is found at P283 and P286. P290 carries the hydroxyproline; partial modification. An allysine mark is found at K312 and K315. P327, P342, and P347 each carry 4-hydroxyproline; partial. P352 and P355 each carry hydroxyproline; partial. Residue P360 is modified to 4-hydroxyproline; partial. Residues K375, K379, and K382 each carry the allysine modification. Residue P415 is modified to 4-hydroxyproline; partial. P421 is modified (hydroxyproline; partial). P427 is subject to 4-hydroxyproline; partial. Allysine is present on residues K448 and K451. At P465 the chain carries Hydroxyproline; partial. P481 bears the 4-hydroxyproline; partial mark. Allysine is present on residues K492 and K496. Hydroxyproline; partial is present on residues P522 and P550. 3 positions are modified to allysine: K558, K562, and K566. Residue P580 is modified to 4-hydroxyproline; partial. 4-hydroxyproline is present on residues P589 and P598. P607 is subject to 4-hydroxyproline; partial. A disordered region spans residues 615 to 645 (EGVRRSLSPELREGDPSSSQHLPSTPSSPRV). The segment covering 630–645 (PSSSQHLPSTPSSPRV) has biased composition (low complexity). The residue at position 646 (P646) is a Hydroxyproline; partial. Residues K653 and K656 each carry the allysine modification. P677 is modified (4-hydroxyproline; partial). Allysine is present on residues K693, K697, K735, and K738. 2 positions are modified to hydroxyproline; partial: P769 and P772. An intrachain disulfide couples C776 to C781.

Belongs to the elastin family. The polymeric elastin chains are cross-linked together into an extensible 3D network. Forms a ternary complex with BGN and MFAP2. Interacts with MFAP2 via divalent cations (calcium &gt; magnesium &gt; manganese) in a dose-dependent and saturating manner. Interacts with FBLN5. Interacts with FBN1. Forms a ternary complex with FBN1 and FBLN2 or FBLN5. Interacts with MFAP4 in a Ca (2+)-dependent manner; this interaction promotes ELN self-assembly. Interacts with EFEMP2 with moderate affinity. In terms of processing, elastin is formed through the cross-linking of its soluble precursor tropoelastin. Cross-linking is initiated through the action of lysyl oxidase on exposed lysines to form allysine. Subsequent spontaneous condensation reactions with other allysine or unmodified lysine residues result in various bi-, tri-, and tetrafunctional cross-links. The most abundant cross-links in mature elastin fibers are lysinonorleucine, allysine aldol, desmosine, and isodesmosine. Post-translationally, hydroxylation on proline residues within the sequence motif, GXPG, is most likely 4-hydroxy as this fits the requirement for 4-hydroxylation in vertebrates. As to expression, expressed within the outer myometrial smooth muscle and throughout the arteriolar tree of uterus (at protein level). Also expressed in the large arteries, lung and skin.

It is found in the secreted. It localises to the extracellular space. Its subcellular location is the extracellular matrix. Major structural protein of tissues such as aorta and nuchal ligament, which must expand rapidly and recover completely. Molecular determinant of the late arterial morphogenesis, stabilizing arterial structure by regulating proliferation and organization of vascular smooth muscle. This chain is Elastin (ELN), found in Homo sapiens (Human).